The primary structure comprises 402 residues: Queuine tRNA-ribosyltransferase-like protein (402 aa).

Belongs to the queuine tRNA-ribosyltransferase family.

This is Queuine tRNA-ribosyltransferase-like protein from Theileria parva (East coast fever infection agent).